The sequence spans 453 residues: Allantoinase (453 aa).

Zn(2+) contacts are provided by His-59, His-61, Lys-146, His-186, His-242, and Asp-315. Lys-146 is subject to N6-carboxylysine.

Belongs to the metallo-dependent hydrolases superfamily. Allantoinase family. In terms of assembly, homotetramer. Requires Zn(2+) as cofactor. Carboxylation allows a single lysine to coordinate two zinc ions.

The catalysed reaction is (S)-allantoin + H2O = allantoate + H(+). It functions in the pathway nitrogen metabolism; (S)-allantoin degradation; allantoate from (S)-allantoin: step 1/1. Functionally, catalyzes the conversion of allantoin (5-ureidohydantoin) to allantoic acid by hydrolytic cleavage of the five-member hydantoin ring. This is Allantoinase from Salmonella choleraesuis (strain SC-B67).